Here is a 179-residue protein sequence, read N- to C-terminus: Large ribosomal subunit protein uL5 (179 aa).

The protein belongs to the universal ribosomal protein uL5 family. As to quaternary structure, part of the 50S ribosomal subunit; part of the 5S rRNA/L5/L18/L25 subcomplex. Contacts the 5S rRNA and the P site tRNA. Forms a bridge to the 30S subunit in the 70S ribosome.

In terms of biological role, this is one of the proteins that bind and probably mediate the attachment of the 5S RNA into the large ribosomal subunit, where it forms part of the central protuberance. In the 70S ribosome it contacts protein S13 of the 30S subunit (bridge B1b), connecting the 2 subunits; this bridge is implicated in subunit movement. Contacts the P site tRNA; the 5S rRNA and some of its associated proteins might help stabilize positioning of ribosome-bound tRNAs. The polypeptide is Large ribosomal subunit protein uL5 (Pseudomonas putida (strain ATCC 700007 / DSM 6899 / JCM 31910 / BCRC 17059 / LMG 24140 / F1)).